A 938-amino-acid polypeptide reads, in one-letter code: Isoleucine--tRNA ligase (938 aa).

A 'HIGH' region motif is present at residues 58 to 68 (PYANGSIHIGH). Residue lysine 183 is modified to N6-acetyllysine. Residue glutamate 561 participates in L-isoleucyl-5'-AMP binding. A 'KMSKS' region motif is present at residues 602–606 (KMSKS). An ATP-binding site is contributed by lysine 605. Positions 901, 904, 921, and 924 each coordinate Zn(2+).

This sequence belongs to the class-I aminoacyl-tRNA synthetase family. IleS type 1 subfamily. As to quaternary structure, monomer. It depends on Zn(2+) as a cofactor.

It localises to the cytoplasm. It catalyses the reaction tRNA(Ile) + L-isoleucine + ATP = L-isoleucyl-tRNA(Ile) + AMP + diphosphate. Catalyzes the attachment of isoleucine to tRNA(Ile). As IleRS can inadvertently accommodate and process structurally similar amino acids such as valine, to avoid such errors it has two additional distinct tRNA(Ile)-dependent editing activities. One activity is designated as 'pretransfer' editing and involves the hydrolysis of activated Val-AMP. The other activity is designated 'posttransfer' editing and involves deacylation of mischarged Val-tRNA(Ile). The chain is Isoleucine--tRNA ligase from Escherichia coli O45:K1 (strain S88 / ExPEC).